A 544-amino-acid chain; its full sequence is MSAKAIKFNHHAREKMLKGVNILADSVKVTLGPKGRNVVIAQKYSRPIITKDGVTVAKEIELIDPFENMGAQLTKEVAFQASDSAGDGTTTATVLTQAIVNEGVNAISANMNPIDLKKGIDKCLHYALLELNLLSQNCDNLEKAEQIATISANGEEQIGKLIAQAMERIGTDGVVSVEDAQGYDDELIFKEGLAFDRGYLSPYFINNHEKSTVELNNPSILLLDDKLTHMEDLLPLLEKLANNRNPLLVIAEDINNEVLSRIIGNNMKNNLKVTVIKSPAFGSRRTEILQDLAIYTGGTVISPEIGMDLSEVDTDKLGNASKIIITDSNTTIVHGEGDPQLIMQRIKQLNSQLLNSSSEYDQKKLAERVAKLSGAIAIIKVGAATEVAMKEKKDRVEDALHATKAAIKEGIVPGGGVAYIRIAQTLASLEGDNPDQSFGIKILLKAMESPLKQIAKNAGNEPVEVLSTIKKQTGNFGFDAKNDRYGDMMEFGIIDPTKVTRCALEFAASIASLILTTEVMVADMEDNNANHANHDHAHSLNCSH.

ATP-binding positions include Thr-30–Pro-33, Lys-51, Asp-87–Thr-91, Gly-415, and Asp-495.

This sequence belongs to the chaperonin (HSP60) family. As to quaternary structure, forms a cylinder of 14 subunits composed of two heptameric rings stacked back-to-back. Interacts with the co-chaperonin GroES.

The protein localises to the cytoplasm. The catalysed reaction is ATP + H2O + a folded polypeptide = ADP + phosphate + an unfolded polypeptide.. Functionally, together with its co-chaperonin GroES, plays an essential role in assisting protein folding. The GroEL-GroES system forms a nano-cage that allows encapsulation of the non-native substrate proteins and provides a physical environment optimized to promote and accelerate protein folding. The protein is Chaperonin GroEL 3 of Psychromonas ingrahamii (strain DSM 17664 / CCUG 51855 / 37).